An 864-amino-acid chain; its full sequence is DNA mismatch repair protein MutS (864 aa).

Position 623 to 630 (623 to 630) interacts with ATP; it reads GPNMGGKS.

The protein belongs to the DNA mismatch repair MutS family.

This protein is involved in the repair of mismatches in DNA. It is possible that it carries out the mismatch recognition step. This protein has a weak ATPase activity. This Polaromonas sp. (strain JS666 / ATCC BAA-500) protein is DNA mismatch repair protein MutS.